Reading from the N-terminus, the 340-residue chain is Coproporphyrin III ferrochelatase (340 aa).

Ser52 and Tyr121 together coordinate Fe-coproporphyrin III. Residues His181 and Glu264 each coordinate Fe(2+).

The protein belongs to the ferrochelatase family.

It localises to the cytoplasm. It catalyses the reaction Fe-coproporphyrin III + 2 H(+) = coproporphyrin III + Fe(2+). The protein operates within porphyrin-containing compound metabolism; protoheme biosynthesis. Functionally, involved in coproporphyrin-dependent heme b biosynthesis. Catalyzes the insertion of ferrous iron into coproporphyrin III to form Fe-coproporphyrin III. This chain is Coproporphyrin III ferrochelatase, found in Mycolicibacterium smegmatis (strain ATCC 700084 / mc(2)155) (Mycobacterium smegmatis).